The following is a 36-amino-acid chain: Photosystem I reaction center subunit VIII (36 aa).

Residues 8 to 28 form a helical membrane-spanning segment; it reads SFFVPLVCLVFPAIAMAFLFV.

This sequence belongs to the PsaI family.

Its subcellular location is the plastid. It localises to the chloroplast thylakoid membrane. Its function is as follows. May help in the organization of the PsaL subunit. This chain is Photosystem I reaction center subunit VIII, found in Chara vulgaris (Common stonewort).